The chain runs to 182 residues: MIRALCTIVLIAAGVAVALYLSLVYGYYMSVGVQDASWLTALTGNRPDAKVPFFDKAVGEAPEDKVAYTERPYPVSSTQSPTTTQSPTTTTLKPTTMAVLASIGATPTPVVCHNVRGDMQGIACNVVMKKTVAAALKVQPEAKKDNVNAQYRYGMWTPLRRSRSPFGVWNIPKKLAIAAPDV.

Residues 1–26 (MIRALCTIVLIAAGVAVALYLSLVYG) form the signal peptide. Positions 68–90 (YTERPYPVSSTQSPTTTQSPTTT) are disordered. Positions 74–90 (PVSSTQSPTTTQSPTTT) are enriched in low complexity.

This is an uncharacterized protein from Dryophytes versicolor (chameleon treefrog).